The primary structure comprises 84 residues: MDITKNIVTLLLVVLFPILFYYNNVLAFPASDQSIYARCIGPCPRYAVPHWCENECLSRKYMAGGECAFIEGEGPTPRCCCINL.

The first 27 residues, 1-27 (MDITKNIVTLLLVVLFPILFYYNNVLA), serve as a signal peptide directing secretion. 4 disulfides stabilise this stretch: Cys-39/Cys-81, Cys-43/Cys-67, Cys-52/Cys-79, and Cys-56/Cys-80.

It belongs to the DEFL family.

Its subcellular location is the secreted. This is Putative defensin-like protein 101 from Arabidopsis thaliana (Mouse-ear cress).